The sequence spans 242 residues: Biosynthetic peptidoglycan transglycosylase (242 aa).

The chain crosses the membrane as a helical span at residues 19-39 (LMVVLAVFWGGGIALFSVAPV).

Belongs to the glycosyltransferase 51 family.

It localises to the cell inner membrane. It carries out the reaction [GlcNAc-(1-&gt;4)-Mur2Ac(oyl-L-Ala-gamma-D-Glu-L-Lys-D-Ala-D-Ala)](n)-di-trans,octa-cis-undecaprenyl diphosphate + beta-D-GlcNAc-(1-&gt;4)-Mur2Ac(oyl-L-Ala-gamma-D-Glu-L-Lys-D-Ala-D-Ala)-di-trans,octa-cis-undecaprenyl diphosphate = [GlcNAc-(1-&gt;4)-Mur2Ac(oyl-L-Ala-gamma-D-Glu-L-Lys-D-Ala-D-Ala)](n+1)-di-trans,octa-cis-undecaprenyl diphosphate + di-trans,octa-cis-undecaprenyl diphosphate + H(+). The protein operates within cell wall biogenesis; peptidoglycan biosynthesis. In terms of biological role, peptidoglycan polymerase that catalyzes glycan chain elongation from lipid-linked precursors. The chain is Biosynthetic peptidoglycan transglycosylase from Shigella dysenteriae serotype 1 (strain Sd197).